Here is a 552-residue protein sequence, read N- to C-terminus: MEKVKQTIRAPRGTELQTKGWVQEAALRMLMNNLDPEVAEKPEELVVYGGIGRAARNWESYQAIVDSLKTLESDETLLVQSGKPVAIFKSHEDAPRVLLANSNLVPKWANWDHFRELEKKGLMMYGQMTAGSWIYIGTQGILQGTYETFGEAARQHFGGSLKGTLTLTAGLGGMGGAQPLAVTMNGGVVIAIDVDKRSIDRRIEKRYCDMYTESLEEALAVANEYKEKKEPISIGLLGNAAEILPELVKRNITPDLVTDQTSAHDPLNGYIPVGYTLEEAAKLREEDPERYVQLSKESMTKHVEAMLAMQEKGAITFDYGNNIRQVAFDEGLKNAFDFPGFVPAFIRPLFCEGKGPFRWVALSGDPEDIYKTDEVILREFADNEHLCNWIRMARQQVEFQGLPSRICWLGYGERAKFGRIINEMVANGELSAPIVIGRDHLDCGSVASPNRETEAMKDGSDAVADWPILNALINSVNGASWVSVHHGGGVGMGYSLHAGMVIVADGTEAAAKRIERVLTSDPGMGVVRHVDAGYDLAVETAKEKGVNIPMMK.

Residues 49 to 50 (GG), Q127, 173 to 175 (GMG), D193, 239 to 240 (NA), 260 to 264 (QTSAH), 270 to 271 (YI), and Y319 contribute to the NAD(+) site. C407 is an active-site residue. G489 contacts NAD(+).

It belongs to the urocanase family. NAD(+) serves as cofactor.

Its subcellular location is the cytoplasm. It catalyses the reaction 4-imidazolone-5-propanoate = trans-urocanate + H2O. It functions in the pathway amino-acid degradation; L-histidine degradation into L-glutamate; N-formimidoyl-L-glutamate from L-histidine: step 2/3. Functionally, catalyzes the conversion of urocanate to 4-imidazolone-5-propionate. The sequence is that of Urocanate hydratase from Bacillus cereus (strain AH820).